A 690-amino-acid chain; its full sequence is Eukaryotic translation initiation factor 3 subunit B (690 aa).

Basic and acidic residues predominate over residues 1 to 11 (MAKKKSEEHSS). A disordered region spans residues 1 to 33 (MAKKKSEEHSSADANDSDYQEEPNFDDPPNFVD). The span at 15–25 (NDSDYQEEPNF) shows a compositional bias: acidic residues. The region spanning 57–141 (SVVVVDNIPK…HTFAVNLFTD (85 aa)) is the RRM domain. WD repeat units follow at residues 207-246 (TRER…KIQK), 293-331 (DGMS…LLDL), 334-369 (IKIP…TLME), 442-484 (EIRE…KPSL), and 530-575 (PDHF…IKRT). A coiled-coil region spans residues 614-645 (QKDRLRLTRASKELLEKRSQLRETFMEYRNKR).

This sequence belongs to the eIF-3 subunit B family. Component of the eukaryotic translation initiation factor 3 (eIF-3) complex. The eIF-3 complex interacts with pix. Interacts with mxt.

It is found in the cytoplasm. In terms of biological role, RNA-binding component of the eukaryotic translation initiation factor 3 (eIF-3) complex, which is involved in protein synthesis of a specialized repertoire of mRNAs and, together with other initiation factors, stimulates binding of mRNA and methionyl-tRNAi to the 40S ribosome. The eIF-3 complex specifically targets and initiates translation of a subset of mRNAs involved in cell proliferation. The chain is Eukaryotic translation initiation factor 3 subunit B from Drosophila willistoni (Fruit fly).